A 370-amino-acid polypeptide reads, in one-letter code: UDP-N-acetylglucosamine--N-acetylmuramyl-(pentapeptide) pyrophosphoryl-undecaprenol N-acetylglucosamine transferase (370 aa).

Residues 10–12 (TGG), N124, R166, S198, I252, and Q297 each bind UDP-N-acetyl-alpha-D-glucosamine.

This sequence belongs to the glycosyltransferase 28 family. MurG subfamily.

Its subcellular location is the cell membrane. The enzyme catalyses di-trans,octa-cis-undecaprenyl diphospho-N-acetyl-alpha-D-muramoyl-L-alanyl-D-glutamyl-meso-2,6-diaminopimeloyl-D-alanyl-D-alanine + UDP-N-acetyl-alpha-D-glucosamine = di-trans,octa-cis-undecaprenyl diphospho-[N-acetyl-alpha-D-glucosaminyl-(1-&gt;4)]-N-acetyl-alpha-D-muramoyl-L-alanyl-D-glutamyl-meso-2,6-diaminopimeloyl-D-alanyl-D-alanine + UDP + H(+). The protein operates within cell wall biogenesis; peptidoglycan biosynthesis. In terms of biological role, cell wall formation. Catalyzes the transfer of a GlcNAc subunit on undecaprenyl-pyrophosphoryl-MurNAc-pentapeptide (lipid intermediate I) to form undecaprenyl-pyrophosphoryl-MurNAc-(pentapeptide)GlcNAc (lipid intermediate II). This Finegoldia magna (strain ATCC 29328 / DSM 20472 / WAL 2508) (Peptostreptococcus magnus) protein is UDP-N-acetylglucosamine--N-acetylmuramyl-(pentapeptide) pyrophosphoryl-undecaprenol N-acetylglucosamine transferase.